Here is a 176-residue protein sequence, read N- to C-terminus: CDP-archaeol synthase (176 aa).

Transmembrane regions (helical) follow at residues 12-32, 60-80, 85-105, 118-138, and 141-161; these read FIYWFLKYYLSPMIANASPVL, GFYVGVLMGFLTSIGIGIILC, ILIGLGSSIFALIGDLLGSFI, PIIDQLDFALMATLYYYFLGI, and FISYPLYILYSLIIILALHII.

It belongs to the CDP-archaeol synthase family. Requires Mg(2+) as cofactor.

It is found in the cell membrane. The enzyme catalyses 2,3-bis-O-(geranylgeranyl)-sn-glycerol 1-phosphate + CTP + H(+) = CDP-2,3-bis-O-(geranylgeranyl)-sn-glycerol + diphosphate. It participates in membrane lipid metabolism; glycerophospholipid metabolism. Catalyzes the formation of CDP-2,3-bis-(O-geranylgeranyl)-sn-glycerol (CDP-archaeol) from 2,3-bis-(O-geranylgeranyl)-sn-glycerol 1-phosphate (DGGGP) and CTP. This reaction is the third ether-bond-formation step in the biosynthesis of archaeal membrane lipids. The sequence is that of CDP-archaeol synthase from Staphylothermus marinus (strain ATCC 43588 / DSM 3639 / JCM 9404 / F1).